The sequence spans 200 residues: ATP-dependent Clp protease proteolytic subunit (200 aa).

S103 functions as the Nucleophile in the catalytic mechanism. The active site involves H128.

This sequence belongs to the peptidase S14 family. Fourteen ClpP subunits assemble into 2 heptameric rings which stack back to back to give a disk-like structure with a central cavity, resembling the structure of eukaryotic proteasomes.

It is found in the cytoplasm. The enzyme catalyses Hydrolysis of proteins to small peptides in the presence of ATP and magnesium. alpha-casein is the usual test substrate. In the absence of ATP, only oligopeptides shorter than five residues are hydrolyzed (such as succinyl-Leu-Tyr-|-NHMec, and Leu-Tyr-Leu-|-Tyr-Trp, in which cleavage of the -Tyr-|-Leu- and -Tyr-|-Trp bonds also occurs).. Functionally, cleaves peptides in various proteins in a process that requires ATP hydrolysis. Has a chymotrypsin-like activity. Plays a major role in the degradation of misfolded proteins. The sequence is that of ATP-dependent Clp protease proteolytic subunit from Vibrio cholerae serotype O1 (strain ATCC 39541 / Classical Ogawa 395 / O395).